The chain runs to 552 residues: Urocanate hydratase (552 aa).

Residues 49-50 (GG), Gln-127, 173-175 (GMG), Asp-193, 239-240 (NA), 260-264 (QTSAH), 270-271 (YI), and Tyr-319 each bind NAD(+). Cys-407 is a catalytic residue. NAD(+) is bound at residue Gly-489.

The protein belongs to the urocanase family. It depends on NAD(+) as a cofactor.

The protein resides in the cytoplasm. The catalysed reaction is 4-imidazolone-5-propanoate = trans-urocanate + H2O. It participates in amino-acid degradation; L-histidine degradation into L-glutamate; N-formimidoyl-L-glutamate from L-histidine: step 2/3. Catalyzes the conversion of urocanate to 4-imidazolone-5-propionate. The protein is Urocanate hydratase of Bacillus cereus (strain AH820).